Consider the following 1267-residue polypeptide: DNA-directed RNA polymerase subunit beta (1267 aa).

Belongs to the RNA polymerase beta chain family. The RNAP catalytic core consists of 2 alpha, 1 beta, 1 beta' and 1 omega subunit. When a sigma factor is associated with the core the holoenzyme is formed, which can initiate transcription.

It catalyses the reaction RNA(n) + a ribonucleoside 5'-triphosphate = RNA(n+1) + diphosphate. Its function is as follows. DNA-dependent RNA polymerase catalyzes the transcription of DNA into RNA using the four ribonucleoside triphosphates as substrates. This chain is DNA-directed RNA polymerase subunit beta (rpoB), found in Carsonella ruddii (strain PV).